The chain runs to 393 residues: MTTIGTPLRPNATKVMMLGSGELGKEVVIELQRLGVEVIAVDRYENAPAQQVAHRAYTISMLDGAALRALAEKEKPDFIVPEVEAIATATLVELEQEGYNVVPTAKATQLTMNREGIRRLAAEELGLKTSPYRFVDNLEDFKQAVAEIGIPCVVKPIMSSSGHGQSVIKSEDQIQQAWDYSQEGGRAGGGRVIVEGFIKFDYEITQLTVRHVNGTSFLAPIGHRQEDGDYRESWQPQAMSDLALKRAQETAERITTALGGRGIFGVELFVCGDEIIFNEVSPRPHDTGMVTMASQELSQFALHARAILGLPISEIYQISPAASKAIVVEGKSNNMTFGNLDKVLEEIGTNIRLFGKGEVNGHRRLGVILARDENTEKALAKAERAYAKLAVQL.

N(1)-(5-phospho-beta-D-ribosyl)glycinamide contacts are provided by residues 22 to 23 and glutamate 82; that span reads EL. Residues arginine 114, lysine 155, 160–165, 195–198, and glutamate 203 each bind ATP; these read SSGHGQ and EGFI. The ATP-grasp domain occupies 119-308; the sequence is RLAAEELGLK…QFALHARAIL (190 aa). Positions 267 and 279 each coordinate Mg(2+). Residues aspartate 286, lysine 356, and 363–364 each bind N(1)-(5-phospho-beta-D-ribosyl)glycinamide; that span reads RR.

Belongs to the PurK/PurT family. In terms of assembly, homodimer.

It catalyses the reaction N(1)-(5-phospho-beta-D-ribosyl)glycinamide + formate + ATP = N(2)-formyl-N(1)-(5-phospho-beta-D-ribosyl)glycinamide + ADP + phosphate + H(+). The protein operates within purine metabolism; IMP biosynthesis via de novo pathway; N(2)-formyl-N(1)-(5-phospho-D-ribosyl)glycinamide from N(1)-(5-phospho-D-ribosyl)glycinamide (formate route): step 1/1. Its function is as follows. Involved in the de novo purine biosynthesis. Catalyzes the transfer of formate to 5-phospho-ribosyl-glycinamide (GAR), producing 5-phospho-ribosyl-N-formylglycinamide (FGAR). Formate is provided by PurU via hydrolysis of 10-formyl-tetrahydrofolate. This chain is Formate-dependent phosphoribosylglycinamide formyltransferase, found in Actinobacillus pleuropneumoniae serotype 3 (strain JL03).